The following is a 98-amino-acid chain: NADH-ubiquinone oxidoreductase chain 4L (98 aa).

Helical transmembrane passes span M1 to F21, A29 to L49, and V58 to L78.

It belongs to the complex I subunit 4L family.

It localises to the mitochondrion membrane. It carries out the reaction a ubiquinone + NADH + 5 H(+)(in) = a ubiquinol + NAD(+) + 4 H(+)(out). In terms of biological role, core subunit of the mitochondrial membrane respiratory chain NADH dehydrogenase (Complex I) which catalyzes electron transfer from NADH through the respiratory chain, using ubiquinone as an electron acceptor. Part of the enzyme membrane arm which is embedded in the lipid bilayer and involved in proton translocation. This Oncorhynchus clarkii (Cutthroat trout) protein is NADH-ubiquinone oxidoreductase chain 4L (MT-ND4L).